The chain runs to 177 residues: Large ribosomal subunit protein bL19 (177 aa).

It belongs to the bacterial ribosomal protein bL19 family.

In terms of biological role, this protein is located at the 30S-50S ribosomal subunit interface and may play a role in the structure and function of the aminoacyl-tRNA binding site. The chain is Large ribosomal subunit protein bL19 from Rhizobium meliloti (strain 1021) (Ensifer meliloti).